A 467-amino-acid chain; its full sequence is Acid phosphatase PHO11 (467 aa).

Residues 1 to 17 (MLKSAVYSILAASLVNA) form the signal peptide. H75 functions as the Nucleophile in the catalytic mechanism. N97, N162, N192, N250, and N315 each carry an N-linked (GlcNAc...) asparagine glycan. D338 (proton donor) is an active-site residue. Residues N356, N390, N439, N445, and N461 are each glycosylated (N-linked (GlcNAc...) asparagine).

It belongs to the histidine acid phosphatase family. Glycosylated during secretion across the membrane.

The enzyme catalyses a phosphate monoester + H2O = an alcohol + phosphate. In Saccharomyces cerevisiae (strain ATCC 204508 / S288c) (Baker's yeast), this protein is Acid phosphatase PHO11 (PHO11).